Reading from the N-terminus, the 480-residue chain is Beta-amyrin 28-monooxygenase (480 aa).

Residues 3-23 form a helical membrane-spanning segment; sequence VFFLSLLLICVLSVSIRLYLL. Residue Cys-427 participates in heme binding.

Belongs to the cytochrome P450 family. It depends on heme as a cofactor. Expressed in leaves, stems and fruit skin.

Its subcellular location is the membrane. It carries out the reaction beta-amyrin + 3 reduced [NADPH--hemoprotein reductase] + 3 O2 = oleanolate + 3 oxidized [NADPH--hemoprotein reductase] + 4 H2O + 4 H(+). Its function is as follows. Catalyzes the carboxylation of beta-amyrin at the C-28 position to form oleanolic acid. May be involved in saponin biosynthesis in fruit skin. The sequence is that of Beta-amyrin 28-monooxygenase from Vitis vinifera (Grape).